Consider the following 256-residue polypeptide: Protein FixA (256 aa).

It belongs to the ETF beta-subunit/FixA family. Heterodimer of FixA and FixB.

The protein operates within amine and polyamine metabolism; carnitine metabolism. In terms of biological role, required for anaerobic carnitine reduction. May bring reductant to CaiA. The sequence is that of Protein FixA from Salmonella agona (strain SL483).